The primary structure comprises 447 residues: MEMHPWLPNLKYTEEMLKEIGVNDIMNLFSDVPQDLILKRKLNIPYDKPLSEYEISQRLNELKKKNLELKYPPFIGGGLCPHYIPEAVKFIMSRSEFYTAYTPYQPEISQGLLQAIYEYQSLMAELLEMEFVNASMYDWASAIAEAVLMAHRINRRKSVLLPSNMNPYHREVVKTWVYGKGIRITELPTDSTSGQIDIEKLEQINTDDVSAIYIQQPNFYGIFEENIEYIVDFAKKKNIITIMGVSPLSLGLIKPPGEYGIDIAVGDGQEIGLPLNYGGPLMGIFAVRWDSQLVRQMPGRIVGLTKDEKGNRAFTLILQTREQFTRREKATSNITTNETLMAIGSAVYLSLLGKHGLRDLAEEIYVRSHYAKKKFEELGFKSPYSGEFFEEFVIQFPKNYNLIHSSLLNKRIHGGLQLNDYCALFCFTEVHTRVMIDELVKSIAEVL.

It belongs to the GcvP family. N-terminal subunit subfamily. In terms of assembly, the glycine cleavage system is composed of four proteins: P, T, L and H. In this organism, the P 'protein' is a heterodimer of two subunits.

The enzyme catalyses N(6)-[(R)-lipoyl]-L-lysyl-[glycine-cleavage complex H protein] + glycine + H(+) = N(6)-[(R)-S(8)-aminomethyldihydrolipoyl]-L-lysyl-[glycine-cleavage complex H protein] + CO2. In terms of biological role, the glycine cleavage system catalyzes the degradation of glycine. The P protein binds the alpha-amino group of glycine through its pyridoxal phosphate cofactor; CO(2) is released and the remaining methylamine moiety is then transferred to the lipoamide cofactor of the H protein. This Sulfolobus acidocaldarius (strain ATCC 33909 / DSM 639 / JCM 8929 / NBRC 15157 / NCIMB 11770) protein is Probable glycine dehydrogenase (decarboxylating) subunit 1.